Here is a 430-residue protein sequence, read N- to C-terminus: Enolase (430 aa).

Gln-167 is a (2R)-2-phosphoglycerate binding site. Catalysis depends on Glu-209, which acts as the Proton donor. Mg(2+) is bound by residues Asp-246, Glu-287, and Asp-314. Residues Lys-339, Arg-368, Ser-369, and Lys-390 each contribute to the (2R)-2-phosphoglycerate site. Lys-339 (proton acceptor) is an active-site residue.

It belongs to the enolase family. Mg(2+) is required as a cofactor.

It is found in the cytoplasm. Its subcellular location is the secreted. The protein localises to the cell surface. It carries out the reaction (2R)-2-phosphoglycerate = phosphoenolpyruvate + H2O. It participates in carbohydrate degradation; glycolysis; pyruvate from D-glyceraldehyde 3-phosphate: step 4/5. In terms of biological role, catalyzes the reversible conversion of 2-phosphoglycerate (2-PG) into phosphoenolpyruvate (PEP). It is essential for the degradation of carbohydrates via glycolysis. The polypeptide is Enolase (Prochlorococcus marinus (strain MIT 9312)).